We begin with the raw amino-acid sequence, 418 residues long: Serine--tRNA ligase (418 aa).

231-233 (TAE) serves as a coordination point for L-serine. 262–264 (RSE) lines the ATP pocket. Residue E285 coordinates L-serine. 349-352 (EISS) serves as a coordination point for ATP. S385 lines the L-serine pocket.

The protein belongs to the class-II aminoacyl-tRNA synthetase family. Type-1 seryl-tRNA synthetase subfamily. Homodimer. The tRNA molecule binds across the dimer.

The protein localises to the cytoplasm. The enzyme catalyses tRNA(Ser) + L-serine + ATP = L-seryl-tRNA(Ser) + AMP + diphosphate + H(+). It catalyses the reaction tRNA(Sec) + L-serine + ATP = L-seryl-tRNA(Sec) + AMP + diphosphate + H(+). It functions in the pathway aminoacyl-tRNA biosynthesis; selenocysteinyl-tRNA(Sec) biosynthesis; L-seryl-tRNA(Sec) from L-serine and tRNA(Sec): step 1/1. In terms of biological role, catalyzes the attachment of serine to tRNA(Ser). Is also able to aminoacylate tRNA(Sec) with serine, to form the misacylated tRNA L-seryl-tRNA(Sec), which will be further converted into selenocysteinyl-tRNA(Sec). The sequence is that of Serine--tRNA ligase from Ureaplasma parvum serovar 3 (strain ATCC 27815 / 27 / NCTC 11736).